A 307-amino-acid chain; its full sequence is Ribosomal RNA small subunit methyltransferase H (307 aa).

S-adenosyl-L-methionine contacts are provided by residues 33-35 (GGY), Asp51, Phe82, Asp96, and Gln103.

This sequence belongs to the methyltransferase superfamily. RsmH family.

The protein localises to the cytoplasm. It carries out the reaction cytidine(1402) in 16S rRNA + S-adenosyl-L-methionine = N(4)-methylcytidine(1402) in 16S rRNA + S-adenosyl-L-homocysteine + H(+). Specifically methylates the N4 position of cytidine in position 1402 (C1402) of 16S rRNA. In Rickettsia peacockii (strain Rustic), this protein is Ribosomal RNA small subunit methyltransferase H.